The chain runs to 485 residues: Choline/ethanolamine transporter flvcr2b (485 aa).

At 1–46 (MDTRFNDINRVKMGDESKSVDGEVNDNTYYSKTDAEVNFEHRYTTP) the chain is on the cytoplasmic side. A helical membrane pass occupies residues 47-71 (ETRLYKKRWVIVCLFSSYSLCNSYQ). 2 residues coordinate choline: N68 and W72. At 72–89 (WIQYGIINNIFMRFYGVD) the chain is on the extracellular side. Residues 90-117 (SFTIDWMSMIYMLTYIPLIFPVSWLLDK) form a helical membrane-spanning segment. The Cytoplasmic portion of the chain corresponds to 118 to 119 (KG). The helical transmembrane segment at 120-139 (LRVIALVAAALNCAGTWIKV) threads the bilayer. Residues 140 to 146 (ASARPDL) lie on the Extracellular side of the membrane. The helical transmembrane segment at 147–175 (FPVTFLGQFTCSVAQVFILGMPSRIASVW) threads the bilayer. Q161 and L165 together coordinate choline. At 176 to 180 (FGSDE) the chain is on the cytoplasmic side. A helical transmembrane segment spans residues 181 to 206 (VSTACSIGVFGNQLGIAIGFLVPPIL). Over 207–211 (VPNVD) the chain is Extracellular. The helical transmembrane segment at 212–241 (DLDELAAHIRVMFYITAGVATFLFVLVVIV) threads the bilayer. The Cytoplasmic portion of the chain corresponds to 242-277 (FQERPEIPPTLAQAAARRISPESYSYTASILRLLRN). Residues 278–308 (KAFILLVITYGLNVGCFYAVSTLLNRMIIEH) form a helical membrane-spanning segment. Y295 is a choline binding site. The Extracellular portion of the chain corresponds to 309-312 (YPGE). Residues 313 to 341 (EVNAGRIGLTIVVAGMVGSLICGIWLDRS) traverse the membrane as a helical segment. The Cytoplasmic portion of the chain corresponds to 342-343 (KT). Residues 344 to 366 (YKQTTLAVYLMSLMGLVIYAFTL) form a helical membrane-spanning segment. Residues 367 to 369 (DLH) lie on the Extracellular side of the membrane. A helical transmembrane segment spans residues 370 to 399 (HLWVVFITAGALGFFMTGYLPLGFEFAVEL). Over 400-407 (TYPESEGT) the chain is Cytoplasmic. Residues 408 to 433 (SSGLLNCSAQVFGIIFTICQGKIMDS) traverse the membrane as a helical segment. Q417 serves as a coordination point for choline. Residues 434 to 435 (FG) are Extracellular-facing. A helical transmembrane segment spans residues 436-458 (TLAGNLFLCAFLLIGTIITGCIK). Residues 459-485 (SDLRRQLANQQAQTADHLDTSPTQTRF) are Cytoplasmic-facing.

It belongs to the major facilitator superfamily. Feline leukemia virus subgroup C receptor (TC 2.A.1.28.1) family.

Its subcellular location is the cell membrane. It is found in the mitochondrion membrane. The protein resides in the endoplasmic reticulum membrane. It catalyses the reaction choline(out) = choline(in). It carries out the reaction ethanolamine(in) = ethanolamine(out). The enzyme catalyses heme b(in) = heme b(out). Functionally, choline uniporter that specifically mediates choline uptake at the blood-brain-barrier. Responsible for the majority of choline uptake across the blood-brain-barrier from the circulation into the brain. Choline, a nutrient critical for brain development, is a precursor of phosphatidylcholine, as well as betaine. Also mediates transport of ethanolamine. Choline and ethanolamine transport is not coupled with proton transport and is exclusively driven by the choline gradient across the plasma membrane. Also acts as a heme b transporter. This is Choline/ethanolamine transporter flvcr2b from Danio rerio (Zebrafish).